The following is a 681-amino-acid chain: Long-chain-fatty-acid--CoA ligase heimdall (681 aa).

ATP contacts are provided by residues 223 to 231, 414 to 419, D491, R506, and K639; these read TSGTVGMPK and ECYGMS.

Belongs to the ATP-dependent AMP-binding enzyme family. Bubblegum subfamily.

The enzyme catalyses a long-chain fatty acid + ATP + CoA = a long-chain fatty acyl-CoA + AMP + diphosphate. Functionally, mediates activation of long-chain fatty acids for both synthesis of cellular lipids, and degradation via beta-oxidation. Probably by regulating lipid storage and catabolism, plays a role in neuronal function. The protein is Long-chain-fatty-acid--CoA ligase heimdall of Drosophila melanogaster (Fruit fly).